Reading from the N-terminus, the 692-residue chain is Elongation factor G (692 aa).

One can recognise a tr-type G domain in the interval 8–282 (AKTRNIGIMA…AVIAYLPSPL (275 aa)). GTP contacts are provided by residues 17–24 (AHVDAGKT), 81–85 (DTPGH), and 135–138 (NKMD).

This sequence belongs to the TRAFAC class translation factor GTPase superfamily. Classic translation factor GTPase family. EF-G/EF-2 subfamily.

It is found in the cytoplasm. In terms of biological role, catalyzes the GTP-dependent ribosomal translocation step during translation elongation. During this step, the ribosome changes from the pre-translocational (PRE) to the post-translocational (POST) state as the newly formed A-site-bound peptidyl-tRNA and P-site-bound deacylated tRNA move to the P and E sites, respectively. Catalyzes the coordinated movement of the two tRNA molecules, the mRNA and conformational changes in the ribosome. The sequence is that of Elongation factor G from Streptococcus equi subsp. zooepidemicus (strain MGCS10565).